We begin with the raw amino-acid sequence, 195 residues long: Holliday junction branch migration complex subunit RuvA (195 aa).

The interval M1–K64 is domain I. The domain II stretch occupies residues D65–V137. A flexible linker region spans residues V137 to K141. The domain III stretch occupies residues E142–R195.

The protein belongs to the RuvA family. In terms of assembly, homotetramer. Forms an RuvA(8)-RuvB(12)-Holliday junction (HJ) complex. HJ DNA is sandwiched between 2 RuvA tetramers; dsDNA enters through RuvA and exits via RuvB. An RuvB hexamer assembles on each DNA strand where it exits the tetramer. Each RuvB hexamer is contacted by two RuvA subunits (via domain III) on 2 adjacent RuvB subunits; this complex drives branch migration. In the full resolvosome a probable DNA-RuvA(4)-RuvB(12)-RuvC(2) complex forms which resolves the HJ.

It localises to the cytoplasm. In terms of biological role, the RuvA-RuvB-RuvC complex processes Holliday junction (HJ) DNA during genetic recombination and DNA repair, while the RuvA-RuvB complex plays an important role in the rescue of blocked DNA replication forks via replication fork reversal (RFR). RuvA specifically binds to HJ cruciform DNA, conferring on it an open structure. The RuvB hexamer acts as an ATP-dependent pump, pulling dsDNA into and through the RuvAB complex. HJ branch migration allows RuvC to scan DNA until it finds its consensus sequence, where it cleaves and resolves the cruciform DNA. The chain is Holliday junction branch migration complex subunit RuvA from Kosmotoga olearia (strain ATCC BAA-1733 / DSM 21960 / TBF 19.5.1).